The sequence spans 492 residues: Probable cytosol aminopeptidase (492 aa).

2 residues coordinate Mn(2+): Lys262 and Asp267. Lys274 is an active-site residue. Positions 286, 345, and 347 each coordinate Mn(2+). The active site involves Arg349.

Belongs to the peptidase M17 family. Mn(2+) is required as a cofactor.

It is found in the cytoplasm. It carries out the reaction Release of an N-terminal amino acid, Xaa-|-Yaa-, in which Xaa is preferably Leu, but may be other amino acids including Pro although not Arg or Lys, and Yaa may be Pro. Amino acid amides and methyl esters are also readily hydrolyzed, but rates on arylamides are exceedingly low.. The catalysed reaction is Release of an N-terminal amino acid, preferentially leucine, but not glutamic or aspartic acids.. Presumably involved in the processing and regular turnover of intracellular proteins. Catalyzes the removal of unsubstituted N-terminal amino acids from various peptides. This Acaryochloris marina (strain MBIC 11017) protein is Probable cytosol aminopeptidase.